Reading from the N-terminus, the 223-residue chain is Regulator of G-protein signaling 19 (223 aa).

Residues 1 to 30 (MPTPPEAEKQQTGPEEADQPPSMSSHDAAP) are disordered. The span at 20-29 (PPSMSSHDAA) shows a compositional bias: low complexity. Phosphoserine occurs at positions 24 and 103. One can recognise an RGS domain in the interval 96 to 212 (SFDKLMHSPA…LSSPAYRALL (117 aa)). A Phosphoserine; by MAPK1 and MAPK3 modification is found at Ser157. The interval 213–223 (LQGASQSSSEA) is interaction with GIPC.

In terms of assembly, interacts with GIPC PDZ domain. Interacts with GNAO1. In terms of processing, fatty acylated. Heavily palmitoylated in the cysteine string motif. Post-translationally, phosphorylated, mainly on serine residues.

It localises to the membrane. Inhibits signal transduction by increasing the GTPase activity of G protein alpha subunits thereby driving them into their inactive GDP-bound form. Binds to G-alpha subfamily 1 members, with the order G(i)a3 &gt; G(i)a1 &gt; G(o)a &gt;&gt; G(z)a/G(i)a2. Activity on G(z)-alpha is inhibited by phosphorylation and palmitoylation of the G-protein. This chain is Regulator of G-protein signaling 19 (RGS19), found in Bos taurus (Bovine).